Reading from the N-terminus, the 697-residue chain is Pentatricopeptide repeat-containing protein 1, mitochondrial (697 aa).

A mitochondrion-targeting transit peptide spans 1–36; sequence MLKRAHYVALHVTLNHNGLSYQRVFSCLTQFPMLRH. 2 PPR repeats span residues 257–288 and 294–328; these read RPFT…VKNK and SDVF…NVNF.

The protein localises to the mitochondrion. Functionally, mitochondrial RNA-binding protein required for the stability of the cox2 and cox3 mRNAs. In Schizosaccharomyces pombe (strain 972 / ATCC 24843) (Fission yeast), this protein is Pentatricopeptide repeat-containing protein 1, mitochondrial (ppr1).